Consider the following 289-residue polypeptide: D-alanine aminotransferase (289 aa).

Tyr31 serves as a coordination point for substrate. A pyridoxal 5'-phosphate-binding site is contributed by Arg50. Substrate is bound by residues Arg99 and His101. Residue Lys147 is modified to N6-(pyridoxal phosphate)lysine. Glu179 is a binding site for pyridoxal 5'-phosphate.

The protein belongs to the class-IV pyridoxal-phosphate-dependent aminotransferase family. Homodimer. Requires pyridoxal 5'-phosphate as cofactor.

The enzyme catalyses D-alanine + 2-oxoglutarate = D-glutamate + pyruvate. In terms of biological role, acts on the D-isomers of alanine, leucine, aspartate, glutamate, aminobutyrate, norvaline and asparagine. The enzyme transfers an amino group from a substrate D-amino acid to the pyridoxal phosphate cofactor to form pyridoxamine and an alpha-keto acid in the first half-reaction. The second half-reaction is the reverse of the first, transferring the amino group from the pyridoxamine to a second alpha-keto acid to form the product D-amino acid via a ping-pong mechanism. This is an important process in the formation of D-alanine and D-glutamate, which are essential bacterial cell wall components. The chain is D-alanine aminotransferase (dat) from Listeria monocytogenes serotype 1/2a (strain 10403S).